A 198-amino-acid polypeptide reads, in one-letter code: Paired-like homeodomain transcription factor LEUTX (198 aa).

The segment at residues 33-67 is a DNA-binding region (homeobox); the sequence is PSLATMGKLASKLQLDLSVVKIWFKNQRAKWKRQQ. Residues 65–133 form a disordered region; the sequence is RQQRQQMQTR…PGGASASARV (69 aa). The segment at 79–190 is LEUTX region; that stretch reads PANQTTSVKK…NQYLFPVCLE (112 aa). Residues 110-119 show a composition bias toward basic and acidic residues; that stretch reads ANDHDLREPS. Short sequence motifs (9aaTAD) lie at residues 125-136, 153-161, 163-171, and 178-186; these read GGASASARVSSW, PPWASTLFE, DEFVKIYDL, and SSLNQYLFP.

This sequence belongs to the paired homeobox family.

The protein localises to the nucleus. Its function is as follows. Paired-like homeobox transcription factor involved in embryogenesis. May act as a regulator of embryo genome activation. Binds to a 36 bp DNA elements containing a 5'-TAATCC-3' sequence motif, referred to as EEA motif (EGA-enriched Alu-motif), present in the promoters of target genes activated in early embryos. Inactive transcriptional activity. In Homo sapiens (Human), this protein is Paired-like homeodomain transcription factor LEUTX.